The sequence spans 30 residues: Small toxic protein BsrE (30 aa).

A helical transmembrane segment spans residues 4 to 24; the sequence is FQALMLMLAIGSFIIALLTYI.

The protein resides in the cell membrane. In terms of biological role, toxic component of a type I toxin-antitoxin (TA) system; overexpression in the absence of cognate antisense antitoxin SR5 RNA leads to cell lysis. Base pairing occurs between the 3' UTRs of bsrE mRNA and SR5 RNA which leads to bsrE mRNA degradation initiated by RNase III (rnc) and RNase J1 (rnjA). Genetic evidence suggests an unidentified RNA-binding protein may exist that promotes TA RNA interaction. The chain is Small toxic protein BsrE from Bacillus subtilis (strain 168).